The sequence spans 254 residues: Coiled-coil domain-containing protein 152 (254 aa).

Positions 61 to 246 (SIKEECATLH…LEQRLSVGKD (186 aa)) form a coiled coil.

In terms of tissue distribution, detected in stomach.

This chain is Coiled-coil domain-containing protein 152 (CCDC152), found in Homo sapiens (Human).